A 284-amino-acid polypeptide reads, in one-letter code: 4-hydroxybenzoate octaprenyltransferase (284 aa).

9 consecutive transmembrane segments (helical) span residues 19-39 (IGTL…AKGM), 42-62 (FDVL…GCVI), 93-113 (IVLF…MNPL), 114-134 (TIKL…MKRF), 136-156 (HLPQ…AWAA), 161-181 (LPSI…AYDT), 209-229 (LMVG…GMHY), 235-252 (FYWA…QQHL), and 264-284 (AFLN…ITFW).

The protein belongs to the UbiA prenyltransferase family. Mg(2+) is required as a cofactor.

It is found in the cell inner membrane. The catalysed reaction is all-trans-octaprenyl diphosphate + 4-hydroxybenzoate = 4-hydroxy-3-(all-trans-octaprenyl)benzoate + diphosphate. It participates in cofactor biosynthesis; ubiquinone biosynthesis. Its function is as follows. Catalyzes the prenylation of para-hydroxybenzoate (PHB) with an all-trans polyprenyl group. Mediates the second step in the final reaction sequence of ubiquinone-8 (UQ-8) biosynthesis, which is the condensation of the polyisoprenoid side chain with PHB, generating the first membrane-bound Q intermediate 3-octaprenyl-4-hydroxybenzoate. In Vibrio atlanticus (strain LGP32) (Vibrio splendidus (strain Mel32)), this protein is 4-hydroxybenzoate octaprenyltransferase.